The chain runs to 335 residues: 4-hydroxythreonine-4-phosphate dehydrogenase (335 aa).

Thr132 provides a ligand contact to substrate. Residues His163, His208, and His263 each contribute to the a divalent metal cation site. Lys271, Asn280, and Arg289 together coordinate substrate.

Belongs to the PdxA family. As to quaternary structure, homodimer. Zn(2+) is required as a cofactor. Mg(2+) serves as cofactor. It depends on Co(2+) as a cofactor.

Its subcellular location is the cytoplasm. The catalysed reaction is 4-(phosphooxy)-L-threonine + NAD(+) = 3-amino-2-oxopropyl phosphate + CO2 + NADH. The protein operates within cofactor biosynthesis; pyridoxine 5'-phosphate biosynthesis; pyridoxine 5'-phosphate from D-erythrose 4-phosphate: step 4/5. Its function is as follows. Catalyzes the NAD(P)-dependent oxidation of 4-(phosphooxy)-L-threonine (HTP) into 2-amino-3-oxo-4-(phosphooxy)butyric acid which spontaneously decarboxylates to form 3-amino-2-oxopropyl phosphate (AHAP). The protein is 4-hydroxythreonine-4-phosphate dehydrogenase of Zymomonas mobilis subsp. mobilis (strain ATCC 31821 / ZM4 / CP4).